The primary structure comprises 329 residues: GTP 3',8-cyclase (329 aa).

One can recognise a Radical SAM core domain in the interval 8–234; sequence VFARKFYYLR…QLRQRSDGPA (227 aa). Position 17 (Arg17) interacts with GTP. Cys24 and Cys28 together coordinate [4Fe-4S] cluster. Tyr30 is an S-adenosyl-L-methionine binding site. Position 31 (Cys31) interacts with [4Fe-4S] cluster. A GTP-binding site is contributed by Arg68. Residue Gly72 participates in S-adenosyl-L-methionine binding. Thr99 contributes to the GTP binding site. Ser123 lines the S-adenosyl-L-methionine pocket. Lys160 contributes to the GTP binding site. Met194 provides a ligand contact to S-adenosyl-L-methionine. [4Fe-4S] cluster contacts are provided by Cys257 and Cys260. 262–264 provides a ligand contact to GTP; it reads RLR. Cys274 serves as a coordination point for [4Fe-4S] cluster.

It belongs to the radical SAM superfamily. MoaA family. In terms of assembly, monomer and homodimer. Requires [4Fe-4S] cluster as cofactor.

It carries out the reaction GTP + AH2 + S-adenosyl-L-methionine = (8S)-3',8-cyclo-7,8-dihydroguanosine 5'-triphosphate + 5'-deoxyadenosine + L-methionine + A + H(+). It participates in cofactor biosynthesis; molybdopterin biosynthesis. Functionally, catalyzes the cyclization of GTP to (8S)-3',8-cyclo-7,8-dihydroguanosine 5'-triphosphate. The protein is GTP 3',8-cyclase of Shigella flexneri.